Consider the following 227-residue polypeptide: Lipoprotein-releasing system ATP-binding protein LolD (227 aa).

The ABC transporter domain occupies 7-227 (LSCRNLGKSY…RLEGGRLVEA (221 aa)). 43-50 (GTSGSGKS) is an ATP binding site.

This sequence belongs to the ABC transporter superfamily. Lipoprotein translocase (TC 3.A.1.125) family. The complex is composed of two ATP-binding proteins (LolD) and two transmembrane proteins (LolC and LolE).

The protein resides in the cell inner membrane. Functionally, part of the ABC transporter complex LolCDE involved in the translocation of mature outer membrane-directed lipoproteins, from the inner membrane to the periplasmic chaperone, LolA. Responsible for the formation of the LolA-lipoprotein complex in an ATP-dependent manner. The protein is Lipoprotein-releasing system ATP-binding protein LolD of Pseudomonas syringae pv. tomato (strain ATCC BAA-871 / DC3000).